Here is a 418-residue protein sequence, read N- to C-terminus: E3 ubiquitin-protein ligase pellino homolog 1 (418 aa).

The 188-residue stretch at 13–200 folds into the FHA; atypical domain; sequence APVKYGELIV…MHPRNGFTED (188 aa). S121 is subject to Phosphoserine. T127 carries the phosphothreonine modification. Positions 311-399 are ring-like domain; necessary for ubiquitination of RIPK3; the sequence is CGHVHGYHNW…TFHAACPFCA (89 aa).

This sequence belongs to the pellino family. In terms of assembly, interacts with MAP3K7. Upon IL1B treatment, forms a complex with TRAF6, IRAK1, IRAK4 and MYD88; this complex recruits MAP3K7/TAK1, TAB1 and TAB2 to mediate NF-kappa-B activation. Direct binding of SMAD6 to PELI1 prevents the complex formation and hence negatively regulates IL1R-TLR signaling and eventually NF-kappa-B-mediated gene expression. Interacts (via atypical FHA domain) with RIPK3. Binds preferentially to the 'Thr-182' phosphorylated form of RIPK3. Interacts with RIPK1. Phosphorylation by IRAK1 and IRAK4 enhances its E3 ligase activity. Phosphorylated by ATM in response to DNA damage, promoting localization to DNA double-strand breaks (DSBs) and ability to mediate 'Lys-63'-linked ubiquitination of NBN. Post-translationally, sumoylated.

Its subcellular location is the chromosome. The enzyme catalyses S-ubiquitinyl-[E2 ubiquitin-conjugating enzyme]-L-cysteine + [acceptor protein]-L-lysine = [E2 ubiquitin-conjugating enzyme]-L-cysteine + N(6)-ubiquitinyl-[acceptor protein]-L-lysine.. It functions in the pathway protein modification; protein ubiquitination. E3 ubiquitin ligase catalyzing the covalent attachment of ubiquitin moieties onto substrate proteins. Involved in the TLR and IL-1 signaling pathways via interaction with the complex containing IRAK kinases and TRAF6. Acts as a positive regulator of inflammatory response in microglia through activation of NF-kappa-B and MAP kinase. Mediates 'Lys-63'-linked polyubiquitination of IRAK1 allowing subsequent NF-kappa-B activation. Conjugates 'Lys-63'-linked ubiquitin chains to the adapter protein ASC/PYCARD, which in turn is crucial for NLRP3 inflammasome activation. Mediates 'Lys-48'-linked polyubiquitination of RIPK3 leading to its subsequent proteasome-dependent degradation; preferentially recognizes and mediates the degradation of the 'Thr-182' phosphorylated form of RIPK3. Negatively regulates necroptosis by reducing RIPK3 expression. Mediates 'Lys-63'-linked ubiquitination of RIPK1. Following phosphorylation by ATM, catalyzes 'Lys-63'-linked ubiquitination of NBN, promoting DNA repair via homologous recombination. Negatively regulates activation of the metabolic mTORC1 signaling pathway by mediating 'Lys-63'-linked ubiquitination of mTORC1-inhibitory protein TSC1 and thereby promoting TSC1/TSC2 complex stability. The sequence is that of E3 ubiquitin-protein ligase pellino homolog 1 (Peli1) from Mus musculus (Mouse).